A 199-amino-acid chain; its full sequence is 7-methyl-GTP pyrophosphatase (199 aa).

The Proton acceptor role is filled by Asp-76.

The protein belongs to the Maf family. YceF subfamily. It depends on a divalent metal cation as a cofactor.

Its subcellular location is the cytoplasm. It carries out the reaction N(7)-methyl-GTP + H2O = N(7)-methyl-GMP + diphosphate + H(+). Functionally, nucleoside triphosphate pyrophosphatase that hydrolyzes 7-methyl-GTP (m(7)GTP). May have a dual role in cell division arrest and in preventing the incorporation of modified nucleotides into cellular nucleic acids. The polypeptide is 7-methyl-GTP pyrophosphatase (Rhizobium etli (strain ATCC 51251 / DSM 11541 / JCM 21823 / NBRC 15573 / CFN 42)).